A 153-amino-acid chain; its full sequence is Phosphopantetheine adenylyltransferase (153 aa).

Residue S11 participates in substrate binding. Residues 11–12 (SF) and H19 each bind ATP. Residues K43, T75, and R89 each coordinate substrate. ATP contacts are provided by residues 90–92 (GIR), E100, and 124–130 (LSFISSS).

It belongs to the bacterial CoaD family. Homohexamer. The cofactor is Mg(2+).

It is found in the cytoplasm. The enzyme catalyses (R)-4'-phosphopantetheine + ATP + H(+) = 3'-dephospho-CoA + diphosphate. Its pathway is cofactor biosynthesis; coenzyme A biosynthesis; CoA from (R)-pantothenate: step 4/5. In terms of biological role, reversibly transfers an adenylyl group from ATP to 4'-phosphopantetheine, yielding dephospho-CoA (dPCoA) and pyrophosphate. The chain is Phosphopantetheine adenylyltransferase from Porphyromonas gingivalis (strain ATCC 33277 / DSM 20709 / CIP 103683 / JCM 12257 / NCTC 11834 / 2561).